Here is a 291-residue protein sequence, read N- to C-terminus: 4-hydroxy-tetrahydrodipicolinate synthase (291 aa).

Thr44 is a pyruvate binding site. The active-site Proton donor/acceptor is Tyr132. The active-site Schiff-base intermediate with substrate is Lys161. Ile202 serves as a coordination point for pyruvate.

It belongs to the DapA family. Homotetramer; dimer of dimers.

The protein localises to the cytoplasm. It catalyses the reaction L-aspartate 4-semialdehyde + pyruvate = (2S,4S)-4-hydroxy-2,3,4,5-tetrahydrodipicolinate + H2O + H(+). It participates in amino-acid biosynthesis; L-lysine biosynthesis via DAP pathway; (S)-tetrahydrodipicolinate from L-aspartate: step 3/4. Catalyzes the condensation of (S)-aspartate-beta-semialdehyde [(S)-ASA] and pyruvate to 4-hydroxy-tetrahydrodipicolinate (HTPA). This is 4-hydroxy-tetrahydrodipicolinate synthase from Endomicrobium trichonymphae.